Reading from the N-terminus, the 168-residue chain is Chorismate pyruvate-lyase (168 aa).

Substrate contacts are provided by methionine 36, arginine 78, leucine 116, and glutamate 157.

The protein belongs to the UbiC family. In terms of assembly, monomer.

The protein resides in the cytoplasm. It carries out the reaction chorismate = 4-hydroxybenzoate + pyruvate. Its pathway is cofactor biosynthesis; ubiquinone biosynthesis. Removes the pyruvyl group from chorismate, with concomitant aromatization of the ring, to provide 4-hydroxybenzoate (4HB) for the ubiquinone pathway. The protein is Chorismate pyruvate-lyase of Yersinia enterocolitica serotype O:8 / biotype 1B (strain NCTC 13174 / 8081).